The sequence spans 102 residues: Large ribosomal subunit protein bL21 (102 aa).

Residues 79–91 (RKDSKRKKGHRQP) show a composition bias toward basic residues. The interval 79–102 (RKDSKRKKGHRQPYTKLTIDKINA) is disordered.

Belongs to the bacterial ribosomal protein bL21 family. As to quaternary structure, part of the 50S ribosomal subunit. Contacts protein L20.

This protein binds to 23S rRNA in the presence of protein L20. This is Large ribosomal subunit protein bL21 from Staphylococcus saprophyticus subsp. saprophyticus (strain ATCC 15305 / DSM 20229 / NCIMB 8711 / NCTC 7292 / S-41).